We begin with the raw amino-acid sequence, 265 residues long: Hydroxyethylthiazole kinase (265 aa).

Met-44 is a binding site for substrate. ATP contacts are provided by Lys-120 and Ser-166. Substrate is bound at residue Gly-193.

It belongs to the Thz kinase family. Requires Mg(2+) as cofactor.

It catalyses the reaction 5-(2-hydroxyethyl)-4-methylthiazole + ATP = 4-methyl-5-(2-phosphooxyethyl)-thiazole + ADP + H(+). It participates in cofactor biosynthesis; thiamine diphosphate biosynthesis; 4-methyl-5-(2-phosphoethyl)-thiazole from 5-(2-hydroxyethyl)-4-methylthiazole: step 1/1. Its function is as follows. Catalyzes the phosphorylation of the hydroxyl group of 4-methyl-5-beta-hydroxyethylthiazole (THZ). This Methanosphaerula palustris (strain ATCC BAA-1556 / DSM 19958 / E1-9c) protein is Hydroxyethylthiazole kinase.